The chain runs to 141 residues: Nucleoside triphosphatase NudI (141 aa).

Residues 1–141 (MRQRTIVCPL…RHTLALKGLL (141 aa)) form the Nudix hydrolase domain. The Nudix box signature appears at 38 to 59 (GGVEPGERIEEALRREIREELG).

It belongs to the Nudix hydrolase family. NudI subfamily. In terms of assembly, monomer. It depends on Mg(2+) as a cofactor.

It catalyses the reaction a ribonucleoside 5'-triphosphate + H2O = a ribonucleoside 5'-phosphate + diphosphate + H(+). It carries out the reaction a 2'-deoxyribonucleoside 5'-triphosphate + H2O = a 2'-deoxyribonucleoside 5'-phosphate + diphosphate + H(+). The enzyme catalyses dUTP + H2O = dUMP + diphosphate + H(+). The catalysed reaction is dTTP + H2O = dTMP + diphosphate + H(+). It catalyses the reaction dCTP + H2O = dCMP + diphosphate + H(+). Catalyzes the hydrolysis of nucleoside triphosphates, with a preference for pyrimidine deoxynucleoside triphosphates (dUTP, dTTP and dCTP). This is Nucleoside triphosphatase NudI from Salmonella heidelberg (strain SL476).